Consider the following 292-residue polypeptide: Probable endonuclease lcl3 (292 aa).

The tract at residues 1-27 (MRWPPWSSESTNDEQKQTPSSWLSSAA) is disordered. Over residues 17–27 (QTPSSWLSSAA) the composition is skewed to polar residues. The chain crosses the membrane as a helical span at residues 45 to 61 (IIPTVVLTSGILIAVRF). The TNase-like domain occupies 83–250 (RSIFGQVTSV…KKRARGLWKD (168 aa)). Residue R134 is part of the active site. D139 contributes to the Ca(2+) binding site. Active-site residues include E142 and R182. Positions 257–292 (GWESPREYKNRMGMGDPLPIEKGNGKGNGKGKIGQK) are disordered. Residues 281–292 (GKGNGKGKIGQK) show a composition bias toward gly residues.

It belongs to the LCL3 family.

The protein resides in the mitochondrion. It is found in the membrane. In Penicillium rubens (strain ATCC 28089 / DSM 1075 / NRRL 1951 / Wisconsin 54-1255) (Penicillium chrysogenum), this protein is Probable endonuclease lcl3 (lcl3).